We begin with the raw amino-acid sequence, 277 residues long: tRNA uridine(34) hydroxylase (277 aa).

In terms of domain architecture, Rhodanese spans 126-221 (SSPDVHVIDT…YLETMRGDDS (96 aa)). Cysteine 181 acts as the Cysteine persulfide intermediate in catalysis.

The protein belongs to the TrhO family.

The enzyme catalyses uridine(34) in tRNA + AH2 + O2 = 5-hydroxyuridine(34) in tRNA + A + H2O. Its function is as follows. Catalyzes oxygen-dependent 5-hydroxyuridine (ho5U) modification at position 34 in tRNAs. In Anaplasma marginale (strain St. Maries), this protein is tRNA uridine(34) hydroxylase.